The primary structure comprises 82 residues: MSAEKKQNLQDTFLNSVRKSKTPLTIFLVNGVKLQGVVSWFDNFCVLLRRDGQSQLVYKHAISTIMPAQPVQLYEPSADADD.

The Sm domain maps to 11–71; sequence DTFLNSVRKS…ISTIMPAQPV (61 aa).

It belongs to the Hfq family. In terms of assembly, homohexamer.

Functionally, RNA chaperone that binds small regulatory RNA (sRNAs) and mRNAs to facilitate mRNA translational regulation in response to envelope stress, environmental stress and changes in metabolite concentrations. Also binds with high specificity to tRNAs. This Caulobacter vibrioides (strain ATCC 19089 / CIP 103742 / CB 15) (Caulobacter crescentus) protein is RNA-binding protein Hfq.